Reading from the N-terminus, the 209-residue chain is NAD(P)H dehydrogenase (quinone) (209 aa).

In terms of domain architecture, Flavodoxin-like spans 4-199 (VNIIFYSMYG…AMARYQGRHV (196 aa)). FMN is bound by residues 10–15 (SMYGHV) and 87–89 (TRY). Y12 is a binding site for NAD(+). W107 is a substrate binding site. Residues 122-128 (SSGTQHG) and H143 each bind FMN.

It belongs to the WrbA family. The cofactor is FMN.

It catalyses the reaction a quinone + NADH + H(+) = a quinol + NAD(+). The catalysed reaction is a quinone + NADPH + H(+) = a quinol + NADP(+). This chain is NAD(P)H dehydrogenase (quinone), found in Methanosarcina acetivorans (strain ATCC 35395 / DSM 2834 / JCM 12185 / C2A).